The primary structure comprises 452 residues: Metacaspase-1 (452 aa).

The tract at residues 1-97 is disordered; it reads MYPGAGRPTY…GPPLQGRPRD (97 aa). Residues 16–41 are compositionally biased toward low complexity; that stretch reads QKGPYGQPQYQQQYAPPYPERYQQPY. Residues His238 and Cys294 contribute to the active site.

It belongs to the peptidase C14B family.

Involved in cell death (apoptosis). This is Metacaspase-1 (MCA1) from Eremothecium gossypii (strain ATCC 10895 / CBS 109.51 / FGSC 9923 / NRRL Y-1056) (Yeast).